The sequence spans 339 residues: MEILLQKVYDQENLSKEEMTMIATEIFEGRLSKTKIAAFLMALKVKGETAEEMAGIAQAMQRVAIQVAFPAGTAMDNCGTGGDKSNSFNISTTSAFVLAAAGIPVAKHGNRSISSRSGSADVCQELGIDINMRPEDMTYLLEKVGIAFLFAPHVHPNMKYVMDVRKELGTPTIFNLIGPLTNPVHLETQLMGIYRRDLLEQTAEVLGQLGRKRAVVLNGAGFMDEASLAGENHYALYENGEVHLYTLRPEDVGLTSYPLEAITGGEAKENAAILRSVLDGEPGAYLDTVLLNAGFGLFANGKVTTVQEGVDLARDLIRSGLAKQKLADLITYQKEVLAK.

Residues Gly79, 82–83 (GD), Ser87, 89–92 (NIST), 107–115 (KHGNRSISS), and Ser119 each bind 5-phospho-alpha-D-ribose 1-diphosphate. Residue Gly79 participates in anthranilate binding. Ser91 is a binding site for Mg(2+). Position 110 (Asn110) interacts with anthranilate. Arg165 is an anthranilate binding site. Residues Asp224 and Glu225 each coordinate Mg(2+).

This sequence belongs to the anthranilate phosphoribosyltransferase family. Homodimer. Mg(2+) is required as a cofactor.

The catalysed reaction is N-(5-phospho-beta-D-ribosyl)anthranilate + diphosphate = 5-phospho-alpha-D-ribose 1-diphosphate + anthranilate. Its pathway is amino-acid biosynthesis; L-tryptophan biosynthesis; L-tryptophan from chorismate: step 2/5. Functionally, catalyzes the transfer of the phosphoribosyl group of 5-phosphorylribose-1-pyrophosphate (PRPP) to anthranilate to yield N-(5'-phosphoribosyl)-anthranilate (PRA). The sequence is that of Anthranilate phosphoribosyltransferase from Listeria monocytogenes serotype 4b (strain CLIP80459).